The primary structure comprises 484 residues: Malonate-semialdehyde dehydrogenase 3 (484 aa).

NAD(+) contacts are provided by Phe-152, Lys-176, Glu-179, Arg-180, and Ser-229. Residue Cys-284 is the Nucleophile of the active site. NAD(+) is bound at residue Glu-384.

The protein belongs to the aldehyde dehydrogenase family. IolA subfamily. As to quaternary structure, homotetramer.

The enzyme catalyses 3-oxopropanoate + NAD(+) + CoA + H2O = hydrogencarbonate + acetyl-CoA + NADH + H(+). It carries out the reaction 2-methyl-3-oxopropanoate + NAD(+) + CoA + H2O = propanoyl-CoA + hydrogencarbonate + NADH + H(+). Its pathway is polyol metabolism; myo-inositol degradation into acetyl-CoA; acetyl-CoA from myo-inositol: step 7/7. Functionally, catalyzes the oxidation of malonate semialdehyde (MSA) and methylmalonate semialdehyde (MMSA) into acetyl-CoA and propanoyl-CoA, respectively. Is involved in a myo-inositol catabolic pathway. Bicarbonate, and not CO2, is the end-product of the enzymatic reaction. The protein is Malonate-semialdehyde dehydrogenase 3 of Geobacillus kaustophilus (strain HTA426).